The following is a 68-amino-acid chain: Large ribosomal subunit protein uL29 (68 aa).

This sequence belongs to the universal ribosomal protein uL29 family.

The polypeptide is Large ribosomal subunit protein uL29 (Albidiferax ferrireducens (strain ATCC BAA-621 / DSM 15236 / T118) (Rhodoferax ferrireducens)).